The sequence spans 423 residues: CinA-like protein (423 aa).

Belongs to the CinA family.

The sequence is that of CinA-like protein from Chlorobium chlorochromatii (strain CaD3).